The sequence spans 289 residues: NFIL3 like protein (289 aa).

Positions 1-27 are disordered; that stretch reads MDVGFSGLPDVSQSHSKTLWGARGRGP. Residues 42–105 form the bZIP domain; the sequence is DTVYWEKRRK…GLLPLTGGPR (64 aa). Residues 48 to 64 are basic motif; the sequence is KRRKNNEAAKRSREKRR. The leucine-zipper stretch occupies residues 70–91; the sequence is IEGRLAALMEENALLKGELKAL.

It belongs to the bZIP family. NFIL3 subfamily.

The protein localises to the nucleus. The protein is NFIL3 like protein of Homo sapiens (Human).